Here is a 143-residue protein sequence, read N- to C-terminus: Putative cytokinin riboside 5'-monophosphate phosphoribohydrolase LOG9 (143 aa).

Substrate-binding positions include 23–24 (RK), 41–47 (RYETMEE), and Thr-53.

It belongs to the LOG family.

It catalyses the reaction N(6)-(dimethylallyl)adenosine 5'-phosphate + H2O = N(6)-dimethylallyladenine + D-ribose 5-phosphate. It carries out the reaction 9-ribosyl-trans-zeatin 5'-phosphate + H2O = trans-zeatin + D-ribose 5-phosphate. Cytokinin-activating enzyme working in the direct activation pathway. Phosphoribohydrolase that converts inactive cytokinin nucleotides to the biologically active free-base forms. The polypeptide is Putative cytokinin riboside 5'-monophosphate phosphoribohydrolase LOG9 (LOG9) (Arabidopsis thaliana (Mouse-ear cress)).